The chain runs to 209 residues: MTIKVLFVDDHEMVRIGISSYLSTQSDIEVVGEGASGKEAIAKAHELKPDLILMDLLMEDMDGVEATTQIKKDLPQIKVLMLTSFIEDKEVYRALDAGVDSYILKTTSAKDIADAVRKTSRGESVFEPEVLVKMRNRMKKRAELYEMLTEREMEILLLIAKGYSNQEIASASHITIKTVKTHVSNILSKLEVQDRTQAVIYAFQHNLIQ.

The Response regulatory domain maps to 4–120; the sequence is KVLFVDDHEM…DIADAVRKTS (117 aa). Position 55 is a 4-aspartylphosphate (Asp-55). The HTH luxR-type domain maps to 141-206; sequence RAELYEMLTE…QAVIYAFQHN (66 aa). Positions 165-184 form a DNA-binding region, H-T-H motif; that stretch reads NQEIASASHITIKTVKTHVS.

As to quaternary structure, homodimer. Phosphorylated by VraS. Phosphorylation state of VraR controls dimerization of the protein.

It localises to the cytoplasm. Member of the two-component regulatory system VraS/VraR involved in the control of the cell wall peptidoglycan biosynthesis. Upon cellular stress, the histidine kinase VraS transfers the phosphoryl group onto VraR. Upon phosphorylation, VraR dimerizes at the N-terminal domain. In turn, phosphorylation-induced dimerization expands and enhances the VraR binding to its own promoter leading to increased expression and subsequent modulation of as many as 40 genes, which ultimately constitute the S.aureus response to cell wall damage. In addition, inhibits the host autophagic flux and delays the early stage of autophagosome formation, thereby promoting bacterial survival. Facilitates the ability of S.aureus to resist host polymorphonuclear leukocytes-mediated phagocytosis and killing thus contributing to immune evasion. In Staphylococcus aureus (strain Mu3 / ATCC 700698), this protein is Response regulator protein VraR (vraR).